Reading from the N-terminus, the 248-residue chain is 2,3-dihydro-2,3-dihydroxybenzoate dehydrogenase (248 aa).

9 to 33 provides a ligand contact to NAD(+); sequence WVTGAGKGIGYATALAFVEAGAKVT. Ser131 provides a ligand contact to substrate. The Proton acceptor role is filled by Tyr144.

Belongs to the short-chain dehydrogenases/reductases (SDR) family. Homotetramer; dimer of dimers. EntA and EntE interact together.

It catalyses the reaction (2S,3S)-2,3-dihydroxy-2,3-dihydrobenzoate + NAD(+) = 2,3-dihydroxybenzoate + NADH + H(+). Its pathway is siderophore biosynthesis; enterobactin biosynthesis. Its activity is regulated as follows. Inhibited by cis-2-hydroxy-3-cyclohexen-1-carboxylate, cis-2-hydroxycyclohexane-1-carboxylate and trans-2-hydroxycyclohexane-1-carboxylate. Functionally, involved in the biosynthesis of the siderophore enterobactin (enterochelin), which is a macrocyclic trimeric lactone of N-(2,3-dihydroxybenzoyl)-serine. Catalyzes the reversible NAD-dependent oxidation of the C3-hydroxyl group of 2,3-dihydro-2,3-dihydroxybenzoate (2,3-diDHB), producing the transient intermediate 2-hydroxy-3-oxo-4,6-cyclohexadiene-1-carboxylate, which undergoes rapid aromatization to the final product, 2,3-dihydroxybenzoate (2,3-DHB). Only the compounds with a C3-hydroxyl group such as methyl 2,3-dihydro-2,3-dihydroxybenzoate, methyl-3-hydroxy-1,4-cyclohexadiene-1-carboxylate, trans-3-hydroxy-2-cyclohexene-1-carboxylate, cis-3-hydroxy-4-cyclohexene-1-carboxylate, cis-3-hydroxycyclohexane-1-carboxylic acid are oxidized to the corresponding ketone products. The stereospecificity of the C3 allylic alcohol group oxidation is 3R in a 1R,3R dihydro substrate. It can also increase the DHB-AMP ligase activity of EntE by interaction EntE. The chain is 2,3-dihydro-2,3-dihydroxybenzoate dehydrogenase from Escherichia coli (strain K12).